Consider the following 340-residue polypeptide: Mitochondrial import receptor subunit TOM40 homolog 2 (340 aa).

The segment at 1 to 37 is disordered; that stretch reads MGNVMASTADAESSRGRGHLSAGLRLPEAPQYSGGVP.

It belongs to the Tom40 family. Forms part of the preprotein translocase of the outer mitochondrial membrane (TOM complex). Interacts with mitochondrial targeting sequences. As to expression, only expressed in the male germline, detected in primary spermatocytes as well as post-meiotic stages. Not detected in stem cells and spermatogonia near the tip of the testis.

Its subcellular location is the mitochondrion outer membrane. Functionally, channel-forming protein essential for import of protein precursors into mitochondria. In Drosophila melanogaster (Fruit fly), this protein is Mitochondrial import receptor subunit TOM40 homolog 2.